Here is a 373-residue protein sequence, read N- to C-terminus: MDLPRRWLFRMLLLVATSSGILLMLYSSAGQQSPETQVPARNMAYPRAFFDPKPPNSENRKSRLCQHSLSLAIQKDRRFRSLFDLSTPVLLWEGLFTQELWNNLSQHKVPYGWQGLSHEVIASTLRLLKSPESGELFGAPRKLPLSCIRCAVVGNGGILNGSRQGQKIDAHDYVFRLNGAITEGFERDVGTKTSFYGFTVNTMKNSLISYAKLGFTSVPQGQNLRYIFIPSSIRDYLMLRSAILGVPVPEGPDKGDRPHTYFGPETSASKFKLLHPDFISYLTERFLKSKLINTRFGDMYMPSTGALMLLTALHTCDQVSAYGFITNNYQKYSDHYFEREKKPLIFYANHDLSLEASLWRDLHNAGILWLYQR.

At 1 to 6 (MDLPRR) the chain is on the cytoplasmic side. Residues 7-27 (WLFRMLLLVATSSGILLMLYS) form a helical; Signal-anchor for type II membrane protein membrane-spanning segment. The Lumenal portion of the chain corresponds to 28–373 (SAGQQSPETQ…NAGILWLYQR (346 aa)). Intrachain disulfides connect Cys-65-Cys-147 and Cys-150-Cys-316. N-linked (GlcNAc...) asparagine glycosylation occurs at Asn-103. Asn-155 serves as a coordination point for CMP-N-acetyl-beta-neuraminate. Asn-160 is a glycosylation site (N-linked (GlcNAc...) asparagine). CMP-N-acetyl-beta-neuraminate contacts are provided by Asn-178, Ser-303, and His-335.

This sequence belongs to the glycosyltransferase 29 family. In terms of tissue distribution, highly expressed in lactating mammary gland and adult testis. Lower levels in kidney.

The protein localises to the golgi apparatus membrane. The catalysed reaction is a beta-D-galactosyl-(1-&gt;3)-N-acetyl-alpha-D-galactosaminyl derivative + CMP-N-acetyl-beta-neuraminate = a beta-D-galactosyl-(1-&gt;3)-[N-acetyl-alpha-neuraminyl-(2-&gt;6)]-N-acetyl-alpha-D-galactosaminyl derivative + CMP + H(+). The enzyme catalyses a 3-O-[N-acetyl-alpha-D-galactosaminyl]-L-threonyl-[protein] + CMP-N-acetyl-beta-neuraminate = a 3-O-[N-acetyl-alpha-neuraminosyl-(2-&gt;6)-N-acetyl-alpha-D-galactosaminyl]-L-threonyl-[protein] + CMP + H(+). It catalyses the reaction a 3-O-[N-acetyl-alpha-neuraminyl-(2-&gt;3)-beta-D-galactosyl-(1-&gt;3)-N-acetyl-alpha-D-galactosaminyl]-L-threonyl-[protein] + CMP-N-acetyl-beta-neuraminate = a 3-O-{alpha-Neu5Ac-(2-&gt;3)-beta-D-Gal-(1-&gt;3)-[alpha-Neu5Ac-(2-&gt;6)]-alpha-D-GalNAc}-L-threonyl-[protein] + CMP + H(+). Its pathway is protein modification; protein glycosylation. In terms of biological role, catalyzes the transfer of N-acetylneuraminyl groups onto glycan chains in glycoproteins. Conjugates sialic acid with an alpha-2-6 linkage to N-acetylgalactosamine (GalNAc) glycan chains linked to serine or threonine in glycoproteins. Sialylates alphaGalNAc- and Galbeta1-&gt;3GalNAc-O-Ser/Thr epitopes also known as Tn and T antigens. This chain is Alpha-N-acetylgalactosaminide alpha-2,6-sialyltransferase 2 (St6galnac2), found in Mus musculus (Mouse).